Here is a 304-residue protein sequence, read N- to C-terminus: Beta-lactamase AER-1 (304 aa).

An N-terminal signal peptide occupies residues 1–37; the sequence is MYVLSVEKPTLRNKFAAGIGVVLVCVVASFIPTPVFA. Residue Ser83 is the Acyl-ester intermediate of the active site. Residues Cys90 and Cys137 are joined by a disulfide bond. The interval 173–195 is disordered; it reads ETQLDRKEPELNEGTPGDVRDTT. Residue 248–250 coordinates substrate; the sequence is KTG.

The protein belongs to the class-A beta-lactamase family.

It catalyses the reaction a beta-lactam + H2O = a substituted beta-amino acid. In terms of biological role, hydrolyzes carbenicillin. Methicillin and oxacillin are weakly hydrolyzed. The polypeptide is Beta-lactamase AER-1 (aer1) (Aeromonas hydrophila).